A 260-amino-acid polypeptide reads, in one-letter code: 4-hydroxy-tetrahydrodipicolinate reductase (260 aa).

12–17 (GFRGKM) contributes to the NAD(+) binding site. Residue K40 participates in NADP(+) binding. Residues 92–94 (GTT) and 118–121 (APNF) contribute to the NAD(+) site. H148 serves as the catalytic Proton donor/acceptor. A (S)-2,3,4,5-tetrahydrodipicolinate-binding site is contributed by H149. The active-site Proton donor is the K152. 158–159 (GT) contacts (S)-2,3,4,5-tetrahydrodipicolinate.

It belongs to the DapB family.

Its subcellular location is the cytoplasm. The catalysed reaction is (S)-2,3,4,5-tetrahydrodipicolinate + NAD(+) + H2O = (2S,4S)-4-hydroxy-2,3,4,5-tetrahydrodipicolinate + NADH + H(+). It catalyses the reaction (S)-2,3,4,5-tetrahydrodipicolinate + NADP(+) + H2O = (2S,4S)-4-hydroxy-2,3,4,5-tetrahydrodipicolinate + NADPH + H(+). The protein operates within amino-acid biosynthesis; L-lysine biosynthesis via DAP pathway; (S)-tetrahydrodipicolinate from L-aspartate: step 4/4. Its function is as follows. Catalyzes the conversion of 4-hydroxy-tetrahydrodipicolinate (HTPA) to tetrahydrodipicolinate. This chain is 4-hydroxy-tetrahydrodipicolinate reductase, found in Lactococcus lactis subsp. lactis (strain IL1403) (Streptococcus lactis).